The sequence spans 525 residues: Transmembrane protein 184C (525 aa).

7 helical membrane passes run 17–37, 48–68, 83–103, 121–141, 212–232, 254–274, and 287–307; these read LLVL…IWKF, SWFI…WGIL, IIRI…ALVY, VIYN…PNLI, YLVI…LLFY, VVFV…LGVI, and AVAT…AAIA. Disordered stretches follow at residues 358-394 and 483-525; these read PKKK…PSPG and LFPS…STDP. Residues 373 to 388 show a composition bias toward low complexity; the sequence is SSLLSSSSQDLTSGSS. A compositionally biased stretch (polar residues) spans 483 to 502; sequence LFPSTETSENSMIDTSESQQ. The segment covering 503-525 has biased composition (low complexity); sequence ESSDLCTESSDSSTESSDLSTDP.

The protein belongs to the TMEM184 family.

It is found in the membrane. Possible tumor suppressor which may play a role in cell growth. This chain is Transmembrane protein 184C (Tmem184c), found in Mus musculus (Mouse).